The primary structure comprises 1133 residues: MTTVDASPGISRFEGISSRSVTVATICSGPCSGSRSHSRYHWVPAAAGWTVGVIATLSLIASVSPLIRWLIRVPREFINNYLFNFPDTSIAWSFVLALLAAALTTRKRIAWLLLLGNMVLAAVLNAVDMAANGNTPAETFGENLGFAVHVVAILLLVLSYREFWAKVRRGALFKAAAVLVAGDVIGILLSLGLVELFPGSLARQDRLPYVANRVVGFALADPDLFSGKPHVLLNAIFGLFGALALIMATIVLFQSQRADNALTGEDESAIRGLLELYGKNDSLGYFATRRDKSVIFAHNGRAAITYRVEIGVCLASGDPVGDPGAWPQAVDAWLELCQTYGWAPGVMGASSQGAQVFRRAGFNAIELGDEAILRTAVYKLSGPDMRGVRQAVTRARRAGLTVRIRRHSDISANEMADTIARADAWRDTEFERGFSMALGRLGDPADSDCLLVEAVDRDDHVVAILSLVPWGTTGVSLDVMRRSPQSPNGTIELMVSELALKGETLGIARISLNFTMFRAAFEQGAQLGAGPIARLWRGLLLFFSRWWQLETLYRSNIKYLPDWVPRYACYEDARLIPRVGVASVIAEGFLVLPFSRRGRVHTGHHPAVPARLAESGLLHHDGSTPDVSGLQTADVDLEVANSRIPEQVRVRLAKLKTLQLNGIDAYPVGHPPSHTVAQALDADDEGTVSISGRILRIRDYGGVLFAHVRDWSGEIQVLLDNLVLECCCIADFTAAIDLGDIVEMTGNMGFSKNGTRSLIVRNWRLIGKCLRPLPNKWKGLTDPEARVRTRYVDLAVNTESRNLIMARSCVLRSVREMLFAKGFVEVETPILQQIHGGATARPFATRINTYDMDLFLRIAPELYLKRLCIGGVERVFELGRAFRNEGVDFSHNPEFTLLEAYQAHADYLMWIDGCRELIQNAAEAANGTQTLMRPRIEGASGTANHLEPIDISGVWPVKTVYEAVSEALGECVDTSTELATLRKLSDAAHIPYWPHWDTGAVVLKLYEHLVENRTDQPTFYIDFPTSVSPLTRPHRSKPGVAERWDLVAWGIELGTAYSELTDPVEQRRRLHEQSLLAVGGNPEAMELDEDFLQAMEYAMPPTGGLGMGIDRLVMLITGRSIRETLPFPLAKPH.

Residues 1–626 (MTTVDASPGI…LLHHDGSTPD (626 aa)) are phosphatidylglycerol lysyltransferase. 7 consecutive transmembrane segments (helical) span residues 43–63 (VPAAAGWTVGVIATLSLIASV), 82–102 (LFNFPDTSIAWSFVLALLAAA), 109–129 (IAWLLLLGNMVLAAVLNAVDM), 140–160 (FGENLGFAVHVVAILLLVLSY), 177–197 (AVLVAGDVIGILLSLGLVELF), 233–253 (LNAIFGLFGALALIMATIVLF), and 575–595 (LIPRVGVASVIAEGFLVLPFS). A lysine--tRNA ligase region spans residues 627–1133 (VSGLQTADVD…TLPFPLAKPH (507 aa)). Residues D1045 and E1052 each contribute to the Mg(2+) site.

It in the N-terminal section; belongs to the LPG synthetase family. This sequence in the C-terminal section; belongs to the class-II aminoacyl-tRNA synthetase family. It depends on Mg(2+) as a cofactor.

Its subcellular location is the cell membrane. It catalyses the reaction tRNA(Lys) + L-lysine + ATP = L-lysyl-tRNA(Lys) + AMP + diphosphate. The enzyme catalyses L-lysyl-tRNA(Lys) + a 1,2-diacyl-sn-glycero-3-phospho-(1'-sn-glycerol) = a 1,2-diacyl-sn-glycero-3-phospho-1'-(3'-O-L-lysyl)-sn-glycerol + tRNA(Lys). Functionally, catalyzes the production of L-lysyl-tRNA(Lys)transfer and the transfer of a lysyl group from L-lysyl-tRNA(Lys) to membrane-bound phosphatidylglycerol (PG), which produces lysylphosphatidylglycerol (LPG), one of the components of the bacterial membrane with a positive net charge. LPG synthesis contributes to the resistance to cationic antimicrobial peptides (CAMPs) and likely protects M.tuberculosis against the CAMPs produced by competiting microorganisms (bacteriocins). In fact, the modification of anionic phosphatidylglycerol with positively charged L-lysine results in repulsion of the peptides. This chain is Lysylphosphatidylglycerol biosynthesis bifunctional protein LysX (lysX), found in Mycobacterium leprae (strain Br4923).